An 865-amino-acid chain; its full sequence is Anaphase-promoting complex subunit 2 (865 aa).

It belongs to the cullin family. As to quaternary structure, the APC/C is composed of at least 10 subunits. Interacts with APC8, APC11, CDC27A and CDC27B. As to expression, highly expressed in immature flowers. Expressed in stems, leaves and flowers.

The protein localises to the nucleus. The protein operates within protein modification; protein ubiquitination. Functionally, component of the anaphase promoting complex/cyclosome (APC/C), a cell cycle-regulated E3 ubiquitin-protein ligase complex that controls progression through mitosis and the G1 phase of the cell cycle. The APC/C complex controls several key steps in the cell cycle by mediating ubiquitination and subsequent degradation of target proteins such as cyclins. The APC/C complex is required for the female gametophyte development and is involved in several aspect of development by controlling cell division and cell elongation. Involved in the control of endoreduplication. The polypeptide is Anaphase-promoting complex subunit 2 (APC2) (Arabidopsis thaliana (Mouse-ear cress)).